The chain runs to 552 residues: Arginine--tRNA ligase (552 aa).

The 'HIGH' region motif lies at 130-140; it reads ANPTGPIHLGG.

The protein belongs to the class-I aminoacyl-tRNA synthetase family. In terms of assembly, monomer.

Its subcellular location is the cytoplasm. It carries out the reaction tRNA(Arg) + L-arginine + ATP = L-arginyl-tRNA(Arg) + AMP + diphosphate. In Nocardia farcinica (strain IFM 10152), this protein is Arginine--tRNA ligase.